The following is a 644-amino-acid chain: Replication protein E1 (644 aa).

Positions 86-88 (KRK) match the Nuclear localization signal motif. The segment at 146–177 (QVESQNGDADLNDSESSGVGASSDVSSETDVD) is disordered. A compositionally biased stretch (low complexity) spans 159-173 (SESSGVGASSDVSSE). The tract at residues 179 to 345 (CNTVPLQNIS…LTVLQHSFND (167 aa)) is DNA-binding region. The region spanning 444-594 (IEFTAFLVAF…FPFDANGNPV (151 aa)) is the SF3 helicase domain. Position 470–477 (470–477 (GPANTGKS)) interacts with ATP. A Glycyl lysine isopeptide (Lys-Gly) (interchain with G-Cter in SUMO) cross-link involves residue lysine 551.

Belongs to the papillomaviridae E1 protein family. Can form hexamers. Interacts with E2 protein; this interaction increases E1 DNA binding specificity. Interacts with host DNA polymerase subunit POLA2. Interacts with host single stranded DNA-binding protein RPA1. Interacts with host TOP1; this interaction stimulates the enzymatic activity of TOP1. Phosphorylated. In terms of processing, sumoylated.

Its subcellular location is the host nucleus. It carries out the reaction Couples ATP hydrolysis with the unwinding of duplex DNA by translocating in the 3'-5' direction.. It catalyses the reaction ATP + H2O = ADP + phosphate + H(+). Functionally, ATP-dependent DNA 3'-5' helicase required for initiation of viral DNA replication. It forms a complex with the viral E2 protein. The E1-E2 complex binds to the replication origin which contains binding sites for both proteins. During the initial step, a dimer of E1 interacts with a dimer of protein E2 leading to a complex that binds the viral origin of replication with high specificity. Then, a second dimer of E1 displaces the E2 dimer in an ATP-dependent manner to form the E1 tetramer. Following this, two E1 monomers are added to each half of the site, which results in the formation of two E1 trimers on the viral ori. Subsequently, two hexamers will be created. The double hexamer acts as a bi-directional helicase machinery and unwinds the viral DNA and then recruits the host DNA polymerase to start replication. The protein is Replication protein E1 of Homo sapiens (Human).